A 280-amino-acid polypeptide reads, in one-letter code: Ribosomal RNA-processing protein 7 homolog A (280 aa).

Residues 59-159 (RTLFVLNVPP…SGIHKWISDY (101 aa)) enclose the RRM domain. A Phosphoserine modification is found at Ser99.

The protein belongs to the RRP7 family. As to quaternary structure, part of the small subunit (SSU) processome, composed of more than 70 proteins and the RNA chaperone small nucleolar RNA (snoRNA) U3. Interacts with NOL6; required for NOL6 localization to nucleolus. In terms of tissue distribution, expressed in the apical radial glial cells in the developing brain.

The protein resides in the nucleus. It is found in the nucleolus. It localises to the cell projection. Its subcellular location is the cilium. The protein localises to the cytoplasm. The protein resides in the cytoskeleton. It is found in the microtubule organizing center. It localises to the centrosome. Its function is as follows. Nucleolar protein that is involved in ribosomal RNA (rRNA) processing. Also plays a role in primary cilia resorption, and cell cycle progression in neurogenesis and neocortex development. Part of the small subunit (SSU) processome, first precursor of the small eukaryotic ribosomal subunit. During the assembly of the SSU processome in the nucleolus, many ribosome biogenesis factors, an RNA chaperone and ribosomal proteins associate with the nascent pre-rRNA and work in concert to generate RNA folding, modifications, rearrangements and cleavage as well as targeted degradation of pre-ribosomal RNA by the RNA exosome. This chain is Ribosomal RNA-processing protein 7 homolog A, found in Homo sapiens (Human).